Reading from the N-terminus, the 480-residue chain is UDP-N-acetylmuramoyl-L-alanyl-D-glutamate--2,6-diaminopimelate ligase (480 aa).

Ser21 serves as a coordination point for UDP-N-acetyl-alpha-D-muramoyl-L-alanyl-D-glutamate. 98–104 serves as a coordination point for ATP; sequence GTNGKSS. Residues 144–145, Ser171, Gln177, and Arg179 contribute to the UDP-N-acetyl-alpha-D-muramoyl-L-alanyl-D-glutamate site; that span reads TT. Lys211 is subject to N6-carboxylysine. Residues Arg372, 396–399, Gly446, and Glu450 contribute to the meso-2,6-diaminopimelate site; that span reads DNPR. The short motif at 396-399 is the Meso-diaminopimelate recognition motif element; it reads DNPR.

The protein belongs to the MurCDEF family. MurE subfamily. Requires Mg(2+) as cofactor. In terms of processing, carboxylation is probably crucial for Mg(2+) binding and, consequently, for the gamma-phosphate positioning of ATP.

The protein resides in the cytoplasm. The catalysed reaction is UDP-N-acetyl-alpha-D-muramoyl-L-alanyl-D-glutamate + meso-2,6-diaminopimelate + ATP = UDP-N-acetyl-alpha-D-muramoyl-L-alanyl-gamma-D-glutamyl-meso-2,6-diaminopimelate + ADP + phosphate + H(+). The protein operates within cell wall biogenesis; peptidoglycan biosynthesis. In terms of biological role, catalyzes the addition of meso-diaminopimelic acid to the nucleotide precursor UDP-N-acetylmuramoyl-L-alanyl-D-glutamate (UMAG) in the biosynthesis of bacterial cell-wall peptidoglycan. In Rickettsia prowazekii (strain Madrid E), this protein is UDP-N-acetylmuramoyl-L-alanyl-D-glutamate--2,6-diaminopimelate ligase.